A 345-amino-acid polypeptide reads, in one-letter code: Uroporphyrinogen decarboxylase (345 aa).

Substrate-binding positions include 27 to 31 (RQAGR), aspartate 77, tyrosine 152, serine 207, and histidine 323.

It belongs to the uroporphyrinogen decarboxylase family. Homodimer.

The protein localises to the cytoplasm. The catalysed reaction is uroporphyrinogen III + 4 H(+) = coproporphyrinogen III + 4 CO2. It participates in porphyrin-containing compound metabolism; protoporphyrin-IX biosynthesis; coproporphyrinogen-III from 5-aminolevulinate: step 4/4. Catalyzes the decarboxylation of four acetate groups of uroporphyrinogen-III to yield coproporphyrinogen-III. The sequence is that of Uroporphyrinogen decarboxylase from Maricaulis maris (strain MCS10) (Caulobacter maris).